A 215-amino-acid chain; its full sequence is Orotate phosphoribosyltransferase (215 aa).

Lysine 26 is a 5-phospho-alpha-D-ribose 1-diphosphate binding site. 34–35 (FF) lines the orotate pocket. Residues 72 to 73 (YK), arginine 99, lysine 100, lysine 103, histidine 105, and 124 to 132 (DDVITAGTA) each bind 5-phospho-alpha-D-ribose 1-diphosphate. Positions 128 and 156 each coordinate orotate.

This sequence belongs to the purine/pyrimidine phosphoribosyltransferase family. PyrE subfamily. As to quaternary structure, homodimer. It depends on Mg(2+) as a cofactor.

The enzyme catalyses orotidine 5'-phosphate + diphosphate = orotate + 5-phospho-alpha-D-ribose 1-diphosphate. The protein operates within pyrimidine metabolism; UMP biosynthesis via de novo pathway; UMP from orotate: step 1/2. Catalyzes the transfer of a ribosyl phosphate group from 5-phosphoribose 1-diphosphate to orotate, leading to the formation of orotidine monophosphate (OMP). This Hahella chejuensis (strain KCTC 2396) protein is Orotate phosphoribosyltransferase.